Reading from the N-terminus, the 443-residue chain is Serine--tRNA ligase (443 aa).

250–252 (TSE) is an L-serine binding site. Position 281 to 283 (281 to 283 (RSE)) interacts with ATP. Glutamate 304 contributes to the L-serine binding site. 368–371 (EISS) contributes to the ATP binding site. Serine 403 lines the L-serine pocket.

It belongs to the class-II aminoacyl-tRNA synthetase family. Type-1 seryl-tRNA synthetase subfamily. Homodimer. The tRNA molecule binds across the dimer.

The protein localises to the cytoplasm. It carries out the reaction tRNA(Ser) + L-serine + ATP = L-seryl-tRNA(Ser) + AMP + diphosphate + H(+). The catalysed reaction is tRNA(Sec) + L-serine + ATP = L-seryl-tRNA(Sec) + AMP + diphosphate + H(+). The protein operates within aminoacyl-tRNA biosynthesis; selenocysteinyl-tRNA(Sec) biosynthesis; L-seryl-tRNA(Sec) from L-serine and tRNA(Sec): step 1/1. In terms of biological role, catalyzes the attachment of serine to tRNA(Ser). Is also able to aminoacylate tRNA(Sec) with serine, to form the misacylated tRNA L-seryl-tRNA(Sec), which will be further converted into selenocysteinyl-tRNA(Sec). In Variovorax paradoxus (strain S110), this protein is Serine--tRNA ligase.